Here is a 526-residue protein sequence, read N- to C-terminus: Bifunctional purine biosynthesis protein PurH (526 aa).

The MGS-like domain occupies 1-148; that stretch reads MSLNNIIKNA…KNYKDVIVIV (148 aa).

This sequence belongs to the PurH family.

It carries out the reaction (6R)-10-formyltetrahydrofolate + 5-amino-1-(5-phospho-beta-D-ribosyl)imidazole-4-carboxamide = 5-formamido-1-(5-phospho-D-ribosyl)imidazole-4-carboxamide + (6S)-5,6,7,8-tetrahydrofolate. The enzyme catalyses IMP + H2O = 5-formamido-1-(5-phospho-D-ribosyl)imidazole-4-carboxamide. It participates in purine metabolism; IMP biosynthesis via de novo pathway; 5-formamido-1-(5-phospho-D-ribosyl)imidazole-4-carboxamide from 5-amino-1-(5-phospho-D-ribosyl)imidazole-4-carboxamide (10-formyl THF route): step 1/1. It functions in the pathway purine metabolism; IMP biosynthesis via de novo pathway; IMP from 5-formamido-1-(5-phospho-D-ribosyl)imidazole-4-carboxamide: step 1/1. This chain is Bifunctional purine biosynthesis protein PurH, found in Buchnera aphidicola subsp. Schizaphis graminum (strain Sg).